A 238-amino-acid chain; its full sequence is NADH-quinone oxidoreductase subunit I (238 aa).

4Fe-4S ferredoxin-type domains are found at residues 81–111 and 123–152; these read LVPR…IEAG and VKFV…MDSG. Positions 91, 94, 97, 101, 132, 135, 138, and 142 each coordinate [4Fe-4S] cluster.

This sequence belongs to the complex I 23 kDa subunit family. NDH-1 is composed of 14 different subunits. Subunits NuoA, H, J, K, L, M, N constitute the membrane sector of the complex. Requires [4Fe-4S] cluster as cofactor.

The protein localises to the cell inner membrane. The catalysed reaction is a quinone + NADH + 5 H(+)(in) = a quinol + NAD(+) + 4 H(+)(out). Functionally, NDH-1 shuttles electrons from NADH, via FMN and iron-sulfur (Fe-S) centers, to quinones in the respiratory chain. The immediate electron acceptor for the enzyme in this species is believed to be ubiquinone. Couples the redox reaction to proton translocation (for every two electrons transferred, four hydrogen ions are translocated across the cytoplasmic membrane), and thus conserves the redox energy in a proton gradient. This is NADH-quinone oxidoreductase subunit I from Anaeromyxobacter sp. (strain Fw109-5).